Consider the following 994-residue polypeptide: MRSSAPMPRMSRRGRVTIGVLVGVFVLFTLLGWGVQAWTDWLWFGEVDYTAVFSGVLVTRLLLFVTVGLAMAVIVGGNLWLAHRLRPRLRPQSPEQATLERYRMLLSPRIGLWFATVSVVVGLFAGLSAQSRWSEWLLFRNGGNFGVKDPEFGVDIGFYIFDLPFWRYLLGTAFTAVVLALLGALAVHYVFGGIRLQGVGDRMSTAARAHLSTLVAVFVLLKAVAYVLDRRTMLLEYNDGANVYGAGYADINALLPAKEILAYISVVVAIAVLVFSNAWMRNLVWPGISLALLGVSAVAIGGIYPWAVQTFEVKPSARDKEARYIERSIEATRAAFSLGEADATRYAASNLQPPASLATDTAVVPNARLLDPQLVSETYTQLQQVRGFYDFGPKLDIDRYTVDGETQDYVVGVREINYGELTTQQSNWINRHTVYTHGYGLVAAPANRVVCGGQPYFVSGFLGERSQEGCAAQTDQIPASQPRIYYGERMEAGDYAIVGKANPEASPAEFDRPVGEDGSESYYTYTGSGGVEVGSFGRRLLYAIKEQESNFLLSEAVNEKSKLLYVRNPRERVEKVAPFLTVDGDPYPAVIDGRVTWIIDGYTTAATYPYAERINLQTETTDELTNRGTFQQARENINYIRNSVKATVDAYDGTVTLYEFDDGDPVLRAWNKAFGGDLIKPKAEIPTELSAHFRYPADLFKVQRNVYTRFHVTNPGDFYSGQDFWQVPNVPDAPDSGQKQPPYYLFTQMPGQDEPRFQLTSAVTPNRRQNLAALMSGSYVDGKPRLEVYELPEDTRISGPVQVHQQMTNNAQIRQQLNLLSSNQAQVQYGNLLSLPFGNGMLYVEPVYVKSNQQQAYPLLQKVLLSYGDGGSFVVLADNLTDGIKQLVEQGEQAGAPSPPPSDDETPPSPTPTPTPTTPSVTPPPLTGEVAEAAQRVQAAIVELRAAQESGDFERYGRALQALDEATAAFEQAAASTPAATPTAAPTGSPSPGG.

A run of 7 helical transmembrane segments spans residues 18–38 (IGVLVGVFVLFTLLGWGVQAW), 61–81 (LLLFVTVGLAMAVIVGGNLWL), 110–130 (IGLWFATVSVVVGLFAGLSAQ), 174–194 (FTAVVLALLGALAVHYVFGGI), 209–229 (AHLSTLVAVFVLLKAVAYVLD), 260–280 (ILAYISVVVAIAVLVFSNAWM), and 283–303 (LVWPGISLALLGVSAVAIGGI). Disordered regions lie at residues 891-934 (GEQA…AEAA) and 970-994 (FEQAAASTPAATPTAAPTGSPSPGG). Residues 897–926 (PSPPPSDDETPPSPTPTPTPTTPSVTPPPL) are compositionally biased toward pro residues.

The protein belongs to the UPF0182 family.

It localises to the cell membrane. The protein is UPF0182 protein Strop_3729 of Salinispora tropica (strain ATCC BAA-916 / DSM 44818 / JCM 13857 / NBRC 105044 / CNB-440).